We begin with the raw amino-acid sequence, 365 residues long: 3-dehydroquinate synthase (365 aa).

NAD(+) is bound by residues 106–110 (GVIGD), 130–131 (TT), Lys142, Lys151, and 169–172 (FFAT). Zn(2+)-binding residues include Glu184, His247, and His264.

This sequence belongs to the sugar phosphate cyclases superfamily. Dehydroquinate synthase family. Co(2+) serves as cofactor. It depends on Zn(2+) as a cofactor. NAD(+) is required as a cofactor.

Its subcellular location is the cytoplasm. The catalysed reaction is 7-phospho-2-dehydro-3-deoxy-D-arabino-heptonate = 3-dehydroquinate + phosphate. Its pathway is metabolic intermediate biosynthesis; chorismate biosynthesis; chorismate from D-erythrose 4-phosphate and phosphoenolpyruvate: step 2/7. Catalyzes the conversion of 3-deoxy-D-arabino-heptulosonate 7-phosphate (DAHP) to dehydroquinate (DHQ). This chain is 3-dehydroquinate synthase, found in Listeria welshimeri serovar 6b (strain ATCC 35897 / DSM 20650 / CCUG 15529 / CIP 8149 / NCTC 11857 / SLCC 5334 / V8).